We begin with the raw amino-acid sequence, 801 residues long: Phosphorus acquisition-controlling protein (801 aa).

4 disordered regions span residues 292-317 (GSSP…DLAR), 366-607 (APSQ…SAGA), 628-725 (NTVP…ASTV), and 756-801 (MKMQ…AMDE). Positions 374-386 (PLTPLIPTSSSST) are enriched in low complexity. Composition is skewed to polar residues over residues 387 to 401 (AGVT…SPEN) and 459 to 472 (KLSS…SVVG). The interaction with negative regulatory factor stretch occupies residues 446-540 (PGIASPATPA…PPSPAVAKPL (95 aa)). Over residues 477-486 (DPMDPDHIEN) the composition is skewed to basic and acidic residues. Positions 535-554 (AVAKPLALPSAALSSPQLKP) are enriched in low complexity. Residues 637–646 (SELSTNLTSK) show a composition bias toward polar residues. The bHLH domain occupies 645–735 (SKRTSHKIAE…EMAIEYIKQL (91 aa)). The segment covering 676–687 (PAKEGGDGDGDG) has biased composition (basic and acidic residues). The span at 690–699 (SSGGGGGSGG) shows a compositional bias: gly residues. Over residues 700–713 (ADREDKREKDKDKA) the composition is skewed to basic and acidic residues. Low complexity predominate over residues 765–777 (GSGSSVGDAGDLG).

In terms of assembly, binds DNA as a dimer.

Its subcellular location is the nucleus. Functionally, factor that activates the transcription of structural genes for phosphorus acquisition. The sequence is that of Phosphorus acquisition-controlling protein (nuc-1) from Neurospora crassa (strain ATCC 24698 / 74-OR23-1A / CBS 708.71 / DSM 1257 / FGSC 987).